Reading from the N-terminus, the 194-residue chain is Ribonuclease HII (194 aa).

One can recognise an RNase H type-2 domain in the interval 3–193 (ILTAGVDEAG…VRNLFAQQAL (191 aa)). A divalent metal cation-binding residues include aspartate 9, glutamate 10, and aspartate 101.

This sequence belongs to the RNase HII family. It depends on Mn(2+) as a cofactor. Mg(2+) is required as a cofactor.

The protein localises to the cytoplasm. It carries out the reaction Endonucleolytic cleavage to 5'-phosphomonoester.. Its function is as follows. Endonuclease that specifically degrades the RNA of RNA-DNA hybrids. The protein is Ribonuclease HII of Neisseria meningitidis serogroup C / serotype 2a (strain ATCC 700532 / DSM 15464 / FAM18).